Consider the following 64-residue polypeptide: Conotoxin LiC121 (64 aa).

An N-terminal signal peptide occupies residues 1-22 (MRCVPVFIILLLLSPSAPSVDA). Residues 23 to 48 (HPKTKDDVPLASFHDDAKRTLQRLWI) constitute a propeptide that is removed on maturation.

This sequence belongs to the conotoxin T superfamily. In terms of processing, contains 2 disulfide bonds that can be either 'C1-C3, C2-C4' or 'C1-C4, C2-C3', since these disulfide connectivities have been observed for conotoxins with cysteine framework V (for examples, see AC P0DQQ7 and AC P81755). In terms of tissue distribution, expressed by the venom duct.

It localises to the secreted. The polypeptide is Conotoxin LiC121 (Conus lividus (Livid cone)).